Here is a 338-residue protein sequence, read N- to C-terminus: (2Z,6E)-hedycaryol synthase (338 aa).

Mg(2+) is bound by residues D82 and E87. A DDXXXE motif motif is present at residues 82-87 (DDQIDE). Residue R175 participates in substrate binding. 2 residues coordinate Mg(2+): N221 and S225. An NXXXSXXXE motif motif is present at residues 221–229 (NDVFSVERE). R228 serves as a coordination point for substrate. Residue E229 coordinates Mg(2+).

It belongs to the terpene synthase family. Homodimer. Requires Mg(2+) as cofactor.

The catalysed reaction is (2E,6E)-farnesyl diphosphate + H2O = (2Z,6E)-hedycaryol + diphosphate. Its pathway is secondary metabolite biosynthesis; terpenoid biosynthesis. Functionally, catalyzes the conversion of (2E,6E)-farnesyl diphosphate (FPP) into (2Z,6E)-hedycaryol via a 1,11-cyclization. This chain is (2Z,6E)-hedycaryol synthase, found in Kitasatospora setae (strain ATCC 33774 / DSM 43861 / JCM 3304 / KCC A-0304 / NBRC 14216 / KM-6054) (Streptomyces setae).